We begin with the raw amino-acid sequence, 408 residues long: Bone morphogenetic protein 4 (408 aa).

A signal peptide spans 1–19 (MIPGNRMLMVVLLCQVLLG). A propeptide spanning residues 20–292 (GASHASLIPE…HTLTRRRAKR (273 aa)) is cleaved from the precursor. A Phosphoserine modification is found at Ser-91. The interval 91–111 (SGEEEEEEQSQGTGLEYPERP) is disordered. Residues Asn-144 and Asn-209 are each glycosylated (N-linked (GlcNAc...) asparagine). Residues 281-307 (RGHTLTRRRAKRSPKHHPQRSRKKNKN) are disordered. A compositionally biased stretch (basic residues) spans 284-307 (TLTRRRAKRSPKHHPQRSRKKNKN). Cystine bridges form between Cys-308–Cys-373, Cys-337–Cys-405, and Cys-341–Cys-407. Residues Asn-350 and Asn-365 are each glycosylated (N-linked (GlcNAc...) asparagine).

The protein belongs to the TGF-beta family. Homodimer; disulfide-linked. Interacts with SOSTDC1, GREM2, RGMA, RGMB and RGMC. Part of a complex consisting of TWSG1 and CHRD. Interacts with the serine proteases, HTRA1 and HTRA3; the interaction with either inhibits BMP4-mediated signaling. The HTRA protease activity is required for this inhibition. Interacts with FBN1 (via N-terminal domain) and FBN2. Interacts with type I receptor BMPR1A. Interacts with type II receptor BMPR2. Interacts with FSTL1; this interaction inhibits the activation of the BMP4/Smad1/5/8 signaling pathway. Interacts with SCUBE3. Interacts with TGFBR3. In terms of tissue distribution, in the cochlea, detected in nonprosensory regions and outer sulcus (at protein level). Prior to gastrulation, expressed in the extraembryonic ectoderm. Later, expressed in the extraembryonic mesoderm.

It localises to the secreted. The protein localises to the extracellular space. The protein resides in the extracellular matrix. Growth factor of the TGF-beta superfamily that plays essential roles in many developmental processes, including neurogenesis, vascular development, angiogenesis and osteogenesis. Acts in concert with PTHLH/PTHRP to stimulate ductal outgrowth during embryonic mammary development and to inhibit hair follicle induction. Initiates the canonical BMP signaling cascade by associating with type I receptor BMPR1A and type II receptor BMPR2. Once all three components are bound together in a complex at the cell surface, BMPR2 phosphorylates and activates BMPR1A. In turn, BMPR1A propagates signal by phosphorylating SMAD1/5/8 that travel to the nucleus and act as activators and repressors of transcription of target genes. Positively regulates the expression of odontogenic development regulator MSX1 via inducing the IPO7-mediated import of SMAD1 to the nucleus. Required for MSX1-mediated mesenchymal molar tooth bud development beyond the bud stage, via promoting Wnt signaling. Acts as a positive regulator of odontoblast differentiation during mesenchymal tooth germ formation, expression is repressed during the bell stage by MSX1-mediated inhibition of CTNNB1 signaling. Able to induce its own expression in dental mesenchymal cells and also in the neighboring dental epithelial cells via an MSX1-mediated pathway. Can also signal through non-canonical BMP pathways such as ERK/MAP kinase, PI3K/Akt or SRC cascades. For example, induces SRC phosphorylation which, in turn, activates VEGFR2, leading to an angiogenic response. The chain is Bone morphogenetic protein 4 from Mus musculus (Mouse).